Here is a 181-residue protein sequence, read N- to C-terminus: Protein Syd (181 aa).

It belongs to the Syd family.

Its subcellular location is the cell inner membrane. Functionally, interacts with the SecY protein in vivo. May bind preferentially to an uncomplexed state of SecY, thus functioning either as a chelating agent for excess SecY in the cell or as a regulatory factor that negatively controls the translocase function. The protein is Protein Syd of Salmonella agona (strain SL483).